Consider the following 3433-residue polypeptide: MSKKPGGPGKSRAVNMLKRGMPRVLSLIGLKRAMLSLIDGKGPIRFVLALLAFFRFTAIAPTRAVLDRWRGVNKQTAMKHLLSFKKELGTLTSAINRRSSKQKKRGGKTGIAVMIGLIASVGAVTLSNFQGKVMMTVNATDVTDVITIPTAAGKNLCIVRAMDVGYMCDDTITYECPVLSAGNDPEDIDCWCTKSAVYVRYGRCTKTRHSRRSRRSLTVQTHGESTLANKKGAWMDSTKATRYLVKTESWILRNPGYALVAAVIGWMLGSNTMQRVVFVVLLLLVAPAYSFNCLGMSNRDFLEGVSGATWVDLVLEGDSCVTIMSKDKPTIDVKMMNMEAANLAEVRSYCYLATVSDLSTKAACPTMGEAHNDKRADPAFVCRQGVVDRGWGNGCGLFGKGSIDTCAKFACSTKAIGRTILKENIKYEVAIFVHGPTTVESHGNYSTQVGATQAGRFSITPAAPSYTLKLGEYGEVTVDCEPRSGIDTNAYYVMTVGTKTFLVHREWFMDLNLPWSSAGSTVWRNRETLMEFEEPHATKQSVIALGSQEGALHQALAGAIPVEFSSNTVKLTSGHLKCRVKMEKLQLKGTTYGVCSKAFKFLGTPADTGHGTVVLELQYTGTDGPCKVPISSVASLNDLTPVGRLVTVNPFVSVATANAKVLIELEPPFGDSYIVVGRGEQQINHHWHKSGSSIGKAFTTTLKGAQRLAALGDTAWDFGSVGGVFTSVGKAVHQVFGGAFRSLFGGMSWITQGLLGALLLWMGINARDRSIALTFLAVGGVLLFLSVNVHADTGCAIDISRQELRCGSGVFIHNDVEAWMDRYKYYPETPQGLAKIIQKAHKEGVCGLRSVSRLEHQMWEAVKDELNTLLKENGVDLSVVVEKQEGMYKSAPKRLTATTEKLEIGWKAWGKSILFAPELANNTFVVDGPETKECPTQNRAWNSLEVEDFGFGLTSTRMFLKVRESNTTECDSKIIGTAVKNNLAIHSDLSYWIESRLNDTWKLERAVLGEVKSCTWPETHTLWGDGILESDLIIPVTLAGPRSNHNRRPGYKTQNQGPWDEGRVEIDFDYCPGTTVTLSESCGHRGPATRTTTESGKLITDWCCRSCTLPPLRYQTDSGCWYGMEIRPQRHDEKTLVQSQVNAYNADMIDPFQLGLLVVFLATQEVLRKRWTAKISMPAILIALLVLVFGGITYTDVLRYVILVGAAFAESNSGGDVVHLALMATFKIQPVFMVASFLKARWTNQENILLMLAAVFFQMAYHDARQILLWEIPDVLNSLAVAWMILRAITFTTTSNVVVPLLALLTPGLRCLNLDVYRILLLMVGIGSLIREKRSAAAKKKGASLLCLALASTGLFNPMILAAGLIACDPNRKRGWPATEVMTAVGLMFAIVGGLAELDIDSMAIPMTIAGLMFAAFVISGKSTDMWIERTADISWESDAEITGSSERVDVRLDDDGNFQLMNDPGAPWKIWMLRMVCLAISAYTPWAILPSVVGFWITLQYTKRGGVLWDTPSPKEYKKGDTTTGVYRIMTRGLLGSYQAGAGVMVEGVFHTLWHTTKGAALMSGEGRLDPYWGSVKEDRLCYGGPWKLQHKWNGQDEVQMIVVEPGKNVKNVQTKPGVFKTPEGEIGAVTLDFPTGTSGSPIVDKNGDVIGLYGNGVIMPNGSYISAIVQGERMDEPIPAGFEPEMLRKKQITVLDLHPGAGKTRRILPQIIKEAINRRLRTAVLAPTRVVAAEMAEALRGLPIRYQTSAVPREHNGNEIVDVMCHATLTHRLMSPHRVPNYNLFVMDEAHFTDPASIAARGYISTKVELGEAAAIFMTATPPGTSDPFPESNSPISDLQTEIPDRAWNSGYEWITEYTGKTVWFVPSVKMGNEIALCLQRAGKKVVQLNRKSYETEYPKCKNDDWDFVITTDISEMGANFKASRVIDSRKSVKPTIITEGEGRVILGEPSAVTAASAAQRRGRIGRNPSQVGDEYCYGGHTNEDDSNFAHWTEARIMLDNINMPNGLIAQFYQPEREKVYTMDGEYRLRGEERKNFLELLRTADLPVWLAYKVAAAGVSYHDRRWCFDGPRTNTILEDNNEVEVITKLGERKILRPRWIDARVYSDHQALKAFKDFASGKRSQIGLIEVLGKMPEHFMGKTWEALDTMYVVATAEKGGRAHRMALEELPDALQTIALIALLSVMTMGVFFLLMQRKGIGKIGLGGAVLGVATFFCWMAEVPGTKIAGMLLLSLLLMIVLIPEPEKQRSQTDNQLAVFLICVMTLVSAVAANEMGWLDKTKSDISSLFGQRIEVKENFSMGEFLLDLRPATAWSLYAVTTAVLTPLLKHLITSDYINTSLTSINVQASALFTLARGFPFVDVGVSALLLAAGCWGQVTLTVTVTAATLLFCHYAYMVPGWQAEAMRSAQRRTAAGIMKNAVVDGIVATDVPELERTTPIMQKKVGQIMLILVSLAAVVVNPSVKTVREAGILITAAAVTLWENGASSVWNATTAIGLCHIMRGGWLSCLSITWTLIKNMEKPGLKRGGAKGRTLGEVWKERLNQMTKEEFTRYRKEAIIEVDRSAAKHARKEGNVTGGHPVSRGTAKLRWLVERRFLEPVGKVIDLGCGRGGWCYYMATQKRVQEVRGYTKGGPGHEEPQLVQSYGWNIVTMKSGVDVFYRPSECCDTLLCDIGESSSSAEVEEHRTIRVLEMVEDWLHRGPREFCVKVLCPYMPKVIEKMELLQRRYGGGLVRNPLSRNSTHEMYWVSRASGNVVHSVNMTSQVLLGRMEKRTWKGPQYEEDVNLGSGTRAVGKPLLNSDTSKIKNRIERLRREYSSTWHHDENHPYRTWNYHGSYDVKPTGSASSLVNGVVRLLSKPWDTITNVTTMAMTDTTPFGQQRVFKEKVDTKAPEPPEGVKYVLNETTNWLWAFLAREKRPRMCSREEFIRKVNSNAALGAMFEEQNQWRSAREAVEDPKFWEMVDEEREAHLRGECHTCIYNMMGKREKKPGEFGKAKGSRAIWFMWLGARFLEFEALGFLNEDHWLGRKNSGGGVEGLGLQKLGYILREVGTRPGGKIYADDTAGWDTRITRADLENEAKVLELLDGEHRRLARAIIELTYRHKVVKVMRPAADGRTVMDVISREDQRGSGQVVTYALNTFTNLAVQLVRMMEGEGVIGPDDVEKLTKGKGPKVRTWLFENGEERLSRMAVSGDDCVVKPLDDRFATSLHFLNAMSKVRKDIQEWKPSTGWYDWQQVPFCSNHFTELIMKDGRTLVVPCRGQDELVGRARISPGAGWNVRDTACLAKSYAQMWLLLYFHRRDLRLMANAICSAVPVNWVPTGRTTWSIHAGGEWMTTEDMLEVWNRVWIEENEWMEDKTPVEKWSDVPYSGKREDIWCGSLIGTRARATWAENIQVAINQVRAIIGDEKYVDYMSSLKRYEDTTLVEDTVL.

Positions 2–15 are interaction with host EXOC1; it reads SKKPGGPGKSRAVN. The Cytoplasmic portion of the chain corresponds to 2–108; it reads SKKPGGPGKS…SSKQKKRGGK (107 aa). Residues 37 to 72 are hydrophobic; homodimerization of capsid protein C; the sequence is LIDGKGPIRFVLALLAFFRFTAIAPTRAVLDRWRGV. The propeptide at 106-123 is ER anchor for the capsid protein C, removed in mature form by serine protease NS3; that stretch reads GGKTGIAVMIGLIASVGA. Residues 109-129 form a helical membrane-spanning segment; the sequence is TGIAVMIGLIASVGAVTLSNF. The Extracellular portion of the chain corresponds to 130-248; that stretch reads QGKVMMTVNA…KATRYLVKTE (119 aa). The N-linked (GlcNAc...) asparagine; by host glycan is linked to N138. Residues 249–269 form a helical membrane-spanning segment; sequence SWILRNPGYALVAAVIGWMLG. Over 270-275 the chain is Cytoplasmic; it reads SNTMQR. The chain crosses the membrane as a helical span at residues 276–290; that stretch reads VVFVVLLLLVAPAYS. The Extracellular portion of the chain corresponds to 291–743; the sequence is FNCLGMSNRD…QVFGGAFRSL (453 aa). 6 cysteine pairs are disulfide-bonded: C293–C320, C350–C406, C350–C411, C364–C395, C382–C406, and C382–C411. The segment at 388 to 401 is fusion peptide; sequence DRGWGNGCGLFGKG. Residue N444 is glycosylated (N-linked (GlcNAc...) asparagine; by host). Disulfide bonds link C480-C578 and C595-C626. A helical transmembrane segment spans residues 744–764; sequence FGGMSWITQGLLGALLLWMGI. Residues 765 to 770 lie on the Cytoplasmic side of the membrane; the sequence is NARDRS. A helical transmembrane segment spans residues 771–791; sequence IALTFLAVGGVLLFLSVNVHA. Residues 792–1216 lie on the Extracellular side of the membrane; it reads DTGCAIDISR…AFAESNSGGD (425 aa). 2 cysteine pairs are disulfide-bonded: C795–C806 and C846–C934. Residues N921, N966, and N998 are each glycosylated (N-linked (GlcNAc...) asparagine; by host). 4 cysteine pairs are disulfide-bonded: C970–C1014, C1071–C1120, C1082–C1103, and C1104–C1107. The chain crosses the membrane as a helical span at residues 1217 to 1237; it reads VVHLALMATFKIQPVFMVASF. The Cytoplasmic segment spans residues 1238–1245; the sequence is LKARWTNQ. Residues 1246 to 1268 traverse the membrane as a helical segment; that stretch reads ENILLMLAAVFFQMAYHDARQIL. The Lumenal portion of the chain corresponds to 1269–1288; it reads LWEIPDVLNSLAVAWMILRA. A helical transmembrane segment spans residues 1289 to 1309; the sequence is ITFTTTSNVVVPLLALLTPGL. Residues 1310-1313 are Cytoplasmic-facing; the sequence is RCLN. A helical membrane pass occupies residues 1314-1331; that stretch reads LDVYRILLLMVGIGSLIR. The Lumenal portion of the chain corresponds to 1332–1345; that stretch reads EKRSAAAKKKGASL. The helical transmembrane segment at 1346-1366 threads the bilayer; sequence LCLALASTGLFNPMILAAGLI. Residues 1367–1375 lie on the Cytoplasmic side of the membrane; sequence ACDPNRKRG. The helical transmembrane segment at 1376–1396 threads the bilayer; the sequence is WPATEVMTAVGLMFAIVGGLA. The Lumenal portion of the chain corresponds to 1397–1399; it reads ELD. The helical transmembrane segment at 1400–1420 threads the bilayer; that stretch reads IDSMAIPMTIAGLMFAAFVIS. Residues 1421-1477 are Cytoplasmic-facing; the sequence is GKSTDMWIERTADISWESDAEITGSSERVDVRLDDDGNFQLMNDPGAPWKIWMLRMV. The interacts with and activates NS3 protease stretch occupies residues 1428–1467; the sequence is IERTADISWESDAEITGSSERVDVRLDDDGNFQLMNDPGA. An intramembrane region (helical) is located at residues 1478 to 1498; that stretch reads CLAISAYTPWAILPSVVGFWI. Over 1499-2174 the chain is Cytoplasmic; sequence TLQYTKRGGV…RMALEELPDA (676 aa). In terms of domain architecture, Peptidase S7 spans 1506-1683; that stretch reads GGVLWDTPSP…ERMDEPIPAG (178 aa). Catalysis depends on charge relay system; for serine protease NS3 activity residues H1556, D1580, and S1640. Residues 1686–1842 enclose the Helicase ATP-binding domain; it reads PEMLRKKQIT…ESNSPISDLQ (157 aa). Positions 1690–1693 are important for RNA-binding; that stretch reads RKKQ. 1699-1706 provides a ligand contact to ATP; the sequence is LHPGAGKT. Residues 1790–1793 carry the DEAH box motif; that stretch reads DEAH. A Helicase C-terminal domain is found at 1853-2018; that stretch reads GYEWITEYTG…GLIAQFYQPE (166 aa). K1894 carries the post-translational modification N6-acetyllysine; by host. Residues 2169–2173 are regulates the ATPase activity of NS3 helicase; it reads EELPD. A helical transmembrane segment spans residues 2175–2195; that stretch reads LQTIALIALLSVMTMGVFFLL. Residues 2196 to 2200 are Lumenal-facing; the sequence is MQRKG. Positions 2201–2221 form an intramembrane region, helical; sequence IGKIGLGGAVLGVATFFCWMA. Position 2222 (E2222) is a topological domain, lumenal. Residues 2223–2243 form a helical membrane-spanning segment; it reads VPGTKIAGMLLLSLLLMIVLI. The Cytoplasmic segment spans residues 2244–2258; sequence PEPEKQRSQTDNQLA. Residues 2259 to 2279 form a helical membrane-spanning segment; that stretch reads VFLICVMTLVSAVAANEMGWL. The Lumenal segment spans residues 2280 to 2312; the sequence is DKTKSDISSLFGQRIEVKENFSMGEFLLDLRPA. Residues 2313-2333 constitute an intramembrane region (helical); sequence TAWSLYAVTTAVLTPLLKHLI. Residues 2334–2380 are Lumenal-facing; it reads TSDYINTSLTSINVQASALFTLARGFPFVDVGVSALLLAAGCWGQVT. A helical transmembrane segment spans residues 2381-2401; the sequence is LTVTVTAATLLFCHYAYMVPG. Over 2402–2444 the chain is Cytoplasmic; the sequence is WQAEAMRSAQRRTAAGIMKNAVVDGIVATDVPELERTTPIMQK. The helical transmembrane segment at 2445-2465 threads the bilayer; the sequence is KVGQIMLILVSLAAVVVNPSV. Topologically, residues 2466–2470 are lumenal; it reads KTVRE. A helical membrane pass occupies residues 2471–2491; it reads AGILITAAAVTLWENGASSVW. The Cytoplasmic portion of the chain corresponds to 2492–3433; sequence NATTAIGLCH…DTTLVEDTVL (942 aa). One can recognise an mRNA cap 0-1 NS5-type MT domain in the interval 2529 to 2794; that stretch reads GGAKGRTLGE…DVNLGSGTRA (266 aa). Residue S2584 coordinates S-adenosyl-L-methionine. At S2584 the chain carries Phosphoserine. Residue K2589 is the For 2'-O-MTase activity of the active site. Residues G2614, W2615, T2632, K2633, E2639, D2659, V2660, D2674, and I2675 each coordinate S-adenosyl-L-methionine. Residue D2674 is the For 2'-O-MTase activity of the active site. Residues K2710 and E2746 each act as for 2'-O-MTase activity in the active site. Y2748 is a binding site for S-adenosyl-L-methionine. The Nuclear localization signal motif lies at 2917-2919; the sequence is REK. Zn(2+) is bound by residues E2968, H2972, C2977, and C2980. The RdRp catalytic domain maps to 3058 to 3210; the sequence is GKIYADDTAG…KPLDDRFATS (153 aa). Positions 3245, 3261, and 3380 each coordinate Zn(2+). A PDZ-binding motif is present at residues 3431 to 3433; sequence TVL.

The protein in the N-terminal section; belongs to the class I-like SAM-binding methyltransferase superfamily. mRNA cap 0-1 NS5-type methyltransferase family. As to quaternary structure, homodimer. Interacts (via N-terminus) with host EXOC1 (via C-terminus); this interaction results in EXOC1 degradation through the proteasome degradation pathway. Interacts with host DDX56; this interaction plays an important role in genomic RNA encapsidation. Forms heterodimers with envelope protein E in the endoplasmic reticulum and Golgi. In terms of assembly, homodimer; in the endoplasmic reticulum and Golgi. As to quaternary structure, homodimer; Homohexamer when secreted. NS1 interacts with NS4B. Interacts with host complement protein CFH; this interaction leads to the degradation of C3. Forms a heterodimer with serine protease NS3. May form homooligomers. Interacts with human SPCS1. In terms of assembly, forms a heterodimer with NS2B. Interacts with NS4B. Interacts with unphosphorylated RNA-directed RNA polymerase NS5; this interaction stimulates RNA-directed RNA polymerase NS5 guanylyltransferase activity. As to quaternary structure, interacts with host RTN3; this interaction is important to remodel host cell membranes. Interacts with Serine protease/Helicase NS3. Interacts with NS1. In terms of assembly, homodimer. Interacts with host STAT2; this interaction inhibits the phosphorylation of the latter, and, when all viral proteins are present (polyprotein), targets STAT2 for degradation. Post-translationally, specific enzymatic cleavages in vivo yield mature proteins. Cleavages in the lumen of endoplasmic reticulum are performed by host signal peptidase, whereas cleavages in the cytoplasmic side are performed by serine protease NS3. Signal cleavage at the 2K-4B site requires a prior NS3 protease-mediated cleavage at the 4A-2K site. Cleaved in post-Golgi vesicles by a host furin, releasing the mature small envelope protein M, and peptide pr. This cleavage is incomplete as up to 30% of viral particles still carry uncleaved prM. In terms of processing, N-glycosylated. Post-translationally, N-glycosylated. The excreted form is glycosylated and this is required for efficient secretion of the protein from infected cells. Acetylated by host KAT5. Acetylation modulates NS3 RNA-binding and unwinding activities and plays an important positive role for viral replication. In terms of processing, phosphorylated on serines residues. This phosphorylation may trigger NS5 nuclear localization.

Its subcellular location is the virion. It localises to the host nucleus. The protein localises to the host cytoplasm. The protein resides in the host perinuclear region. It is found in the secreted. Its subcellular location is the virion membrane. It localises to the host endoplasmic reticulum membrane. The catalysed reaction is Selective hydrolysis of -Xaa-Xaa-|-Yaa- bonds in which each of the Xaa can be either Arg or Lys and Yaa can be either Ser or Ala.. It catalyses the reaction RNA(n) + a ribonucleoside 5'-triphosphate = RNA(n+1) + diphosphate. The enzyme catalyses a ribonucleoside 5'-triphosphate + H2O = a ribonucleoside 5'-diphosphate + phosphate + H(+). It carries out the reaction ATP + H2O = ADP + phosphate + H(+). The catalysed reaction is a 5'-end (5'-triphosphoguanosine)-ribonucleoside in mRNA + S-adenosyl-L-methionine = a 5'-end (N(7)-methyl 5'-triphosphoguanosine)-ribonucleoside in mRNA + S-adenosyl-L-homocysteine. It catalyses the reaction a 5'-end (N(7)-methyl 5'-triphosphoguanosine)-ribonucleoside in mRNA + S-adenosyl-L-methionine = a 5'-end (N(7)-methyl 5'-triphosphoguanosine)-(2'-O-methyl-ribonucleoside) in mRNA + S-adenosyl-L-homocysteine + H(+). Its function is as follows. Plays a role in virus budding by binding to the cell membrane and gathering the viral RNA into a nucleocapsid that forms the core of a mature virus particle. During virus entry, may induce genome penetration into the host cytoplasm after hemifusion induced by the surface proteins. Can migrate to the cell nucleus where it modulates host functions. Overcomes the anti-viral effects of host EXOC1 by sequestering and degrading the latter through the proteasome degradation pathway. In terms of biological role, inhibits RNA silencing by interfering with host Dicer. Functionally, prevents premature fusion activity of envelope proteins in trans-Golgi by binding to envelope protein E at pH6.0. After virion release in extracellular space, gets dissociated from E dimers. Acts as a chaperone for envelope protein E during intracellular virion assembly by masking and inactivating envelope protein E fusion peptide. prM is the only viral peptide matured by host furin in the trans-Golgi network probably to avoid catastrophic activation of the viral fusion activity in acidic Golgi compartment prior to virion release. prM-E cleavage is inefficient, and many virions are only partially matured. These uncleaved prM would play a role in immune evasion. Its function is as follows. May play a role in virus budding. Exerts cytotoxic effects by activating a mitochondrial apoptotic pathway through M ectodomain. May display a viroporin activity. In terms of biological role, binds to host cell surface receptor and mediates fusion between viral and cellular membranes. Envelope protein is synthesized in the endoplasmic reticulum in the form of heterodimer with protein prM. They play a role in virion budding in the ER, and the newly formed immature particle is covered with 60 spikes composed of heterodimer between precursor prM and envelope protein E. The virion is transported to the Golgi apparatus where the low pH causes dissociation of PrM-E heterodimers and formation of E homodimers. prM-E cleavage is inefficient, and many virions are only partially matured. These uncleaved prM would play a role in immune evasion. Functionally, involved in immune evasion, pathogenesis and viral replication. Once cleaved off the polyprotein, is targeted to three destinations: the viral replication cycle, the plasma membrane and the extracellular compartment. Essential for viral replication. Required for formation of the replication complex and recruitment of other non-structural proteins to the ER-derived membrane structures. Excreted as a hexameric lipoparticle that plays a role against host immune response. Antagonizing the complement function. Binds to the host macrophages and dendritic cells. Inhibits signal transduction originating from Toll-like receptor 3 (TLR3). Component of the viral RNA replication complex that functions in virion assembly and antagonizes the host alpha/beta interferon antiviral response. Its function is as follows. Required cofactor for the serine protease function of NS3. May have membrane-destabilizing activity and form viroporins. In terms of biological role, displays three enzymatic activities: serine protease, NTPase and RNA helicase. NS3 serine protease, in association with NS2B, performs its autocleavage and cleaves the polyprotein at dibasic sites in the cytoplasm: C-prM, NS2A-NS2B, NS2B-NS3, NS3-NS4A, NS4A-2K and NS4B-NS5. NS3 RNA helicase binds RNA and unwinds dsRNA in the 3' to 5' direction. NS3 supports the separation of RNA daughter and template strands during viral replication. The helicase part is involved in the inhibition of phosphorylation of host STAT1, and thereby inhibition of host type-I IFN signaling. In addition, NS3 assists the initiation of replication by unwinding the RNA secondary structure in the 3' non-translated region (NTR). Inhibits STAT2 translocation in the nucleus after IFN-alpha treatment. Functionally, facilitates host membrane remodelling necessary for viral replication by interacting with host RTN3. Regulates the ATPase activity of the NS3 helicase activity. NS4A allows NS3 helicase to conserve energy during unwinding. Functions as a signal peptide for NS4B and is required for the interferon antagonism activity of the latter. Its function is as follows. Induces the formation of ER-derived membrane vesicles where the viral replication takes place. Inhibits interferon (IFN)-induced host STAT1 phosphorylation and nuclear translocation, thereby preventing the establishment of cellular antiviral state by blocking the IFN-alpha/beta pathway. Inhibits STAT2 translocation in the nucleus after IFN-alpha treatment. In terms of biological role, replicates the viral (+) and (-) genome, and performs the capping of genomes in the cytoplasm. NS5 methylates viral RNA cap at guanine N-7 and ribose 2'-O positions. Besides its role in RNA genome replication, also prevents the establishment of cellular antiviral state by blocking the interferon-alpha/beta (IFN-alpha/beta) signaling pathway. Inhibits host JAK1 and TYK2 phosphorylation, thereby preventing activation of JAK-STAT signaling pathway. This Aedes (Tropical bont tick) protein is Genome polyprotein.